The primary structure comprises 177 residues: Large ribosomal subunit protein uL5 (177 aa).

This sequence belongs to the universal ribosomal protein uL5 family. In terms of assembly, part of the 50S ribosomal subunit; part of the 5S rRNA/L5/L18/L25 subcomplex. Contacts the 5S rRNA and the P site tRNA. Forms a bridge to the 30S subunit in the 70S ribosome.

Functionally, this is one of the proteins that bind and probably mediate the attachment of the 5S RNA into the large ribosomal subunit, where it forms part of the central protuberance. In the 70S ribosome it contacts protein S13 of the 30S subunit (bridge B1b), connecting the 2 subunits; this bridge is implicated in subunit movement. Contacts the P site tRNA; the 5S rRNA and some of its associated proteins might help stabilize positioning of ribosome-bound tRNAs. The polypeptide is Large ribosomal subunit protein uL5 (Anaplasma phagocytophilum (strain HZ)).